The following is a 76-amino-acid chain: ATP synthase subunit 9, mitochondrial (76 aa).

The next 2 helical transmembrane spans lie at 14–34 (MATLGLGGAAIGIALVFVALI) and 52–72 (ILGFALAEACGLFCLMMSFLL).

Belongs to the ATPase C chain family. F-type ATPases have 2 components, CF(1) - the catalytic core - and CF(0) - the membrane proton channel. CF(1) has five subunits: alpha(3), beta(3), gamma(1), delta(1), epsilon(1). CF(0) has three main subunits: a, b and c.

The protein resides in the mitochondrion membrane. Its function is as follows. Mitochondrial membrane ATP synthase (F(1)F(0) ATP synthase or Complex V) produces ATP from ADP in the presence of a proton gradient across the membrane which is generated by electron transport complexes of the respiratory chain. F-type ATPases consist of two structural domains, F(1) - containing the extramembraneous catalytic core and F(0) - containing the membrane proton channel, linked together by a central stalk and a peripheral stalk. During catalysis, ATP synthesis in the catalytic domain of F(1) is coupled via a rotary mechanism of the central stalk subunits to proton translocation. Part of the complex F(0) domain. A homomeric c-ring of probably 10 subunits is part of the complex rotary element. This Debaryomyces hansenii (strain ATCC 36239 / CBS 767 / BCRC 21394 / JCM 1990 / NBRC 0083 / IGC 2968) (Yeast) protein is ATP synthase subunit 9, mitochondrial (ATP9).